The primary structure comprises 557 residues: Potassium-transporting ATPase potassium-binding subunit (557 aa).

The next 12 helical transmembrane spans lie at 5–25 (GFLL…PLGS), 63–83 (LCAI…MLLG), 132–152 (GLTV…FAFI), 170–190 (LLRI…LFFI), 253–273 (FVQM…FGEV), 283–303 (LLWA…WAEV), 329–349 (VLVS…AVIA), 356–376 (ALGG…FGGV), 379–399 (GLYG…LMIG), 416–436 (LTAL…ALAM), 484–504 (LLAF…MAIA), and 526–546 (LFVG…FIPA).

Belongs to the KdpA family. In terms of assembly, the system is composed of three essential subunits: KdpA, KdpB and KdpC.

It localises to the cell inner membrane. Part of the high-affinity ATP-driven potassium transport (or Kdp) system, which catalyzes the hydrolysis of ATP coupled with the electrogenic transport of potassium into the cytoplasm. This subunit binds the periplasmic potassium ions and delivers the ions to the membrane domain of KdpB through an intramembrane tunnel. The polypeptide is Potassium-transporting ATPase potassium-binding subunit (Shigella flexneri).